The following is a 66-amino-acid chain: uncharacterized protein (66 aa).

This is an uncharacterized protein from Enterobacteria phage T4 (Bacteriophage T4).